The primary structure comprises 129 residues: Small ribosomal subunit protein uS11 (129 aa).

It belongs to the universal ribosomal protein uS11 family. In terms of assembly, part of the 30S ribosomal subunit. Interacts with proteins S7 and S18. Binds to IF-3.

Its function is as follows. Located on the platform of the 30S subunit, it bridges several disparate RNA helices of the 16S rRNA. Forms part of the Shine-Dalgarno cleft in the 70S ribosome. This chain is Small ribosomal subunit protein uS11, found in Beijerinckia indica subsp. indica (strain ATCC 9039 / DSM 1715 / NCIMB 8712).